The following is a 151-amino-acid chain: Prefoldin subunit alpha (151 aa).

The tract at residues 120 to 151 is disordered; it reads TVEEETASLEEKAQQAQQQQMQQLQQMQQEDE. The segment covering 133–151 has biased composition (low complexity); it reads QQAQQQQMQQLQQMQQEDE.

This sequence belongs to the prefoldin subunit alpha family. In terms of assembly, heterohexamer of two alpha and four beta subunits.

The protein resides in the cytoplasm. Molecular chaperone capable of stabilizing a range of proteins. Seems to fulfill an ATP-independent, HSP70-like function in archaeal de novo protein folding. This is Prefoldin subunit alpha from Natronomonas pharaonis (strain ATCC 35678 / DSM 2160 / CIP 103997 / JCM 8858 / NBRC 14720 / NCIMB 2260 / Gabara) (Halobacterium pharaonis).